The following is a 184-amino-acid chain: NADH-quinone oxidoreductase subunit B (184 aa).

The [4Fe-4S] cluster site is built by Cys37, Cys38, Cys103, and Cys132.

This sequence belongs to the complex I 20 kDa subunit family. As to quaternary structure, NDH-1 is composed of 14 different subunits. Subunits NuoB, C, D, E, F, and G constitute the peripheral sector of the complex. It depends on [4Fe-4S] cluster as a cofactor.

The protein resides in the cell membrane. The catalysed reaction is a quinone + NADH + 5 H(+)(in) = a quinol + NAD(+) + 4 H(+)(out). NDH-1 shuttles electrons from NADH, via FMN and iron-sulfur (Fe-S) centers, to quinones in the respiratory chain. The immediate electron acceptor for the enzyme in this species is believed to be a menaquinone. Couples the redox reaction to proton translocation (for every two electrons transferred, four hydrogen ions are translocated across the cytoplasmic membrane), and thus conserves the redox energy in a proton gradient. The chain is NADH-quinone oxidoreductase subunit B from Mycobacterium marinum (strain ATCC BAA-535 / M).